Consider the following 131-residue polypeptide: Small ribosomal subunit protein uS11 (131 aa).

It belongs to the universal ribosomal protein uS11 family. Part of the 30S ribosomal subunit. Interacts with proteins S7 and S18. Binds to IF-3.

Located on the platform of the 30S subunit, it bridges several disparate RNA helices of the 16S rRNA. Forms part of the Shine-Dalgarno cleft in the 70S ribosome. This Halorhodospira halophila (strain DSM 244 / SL1) (Ectothiorhodospira halophila (strain DSM 244 / SL1)) protein is Small ribosomal subunit protein uS11.